The sequence spans 546 residues: Intermembrane transport protein PqiB (546 aa).

The Cytoplasmic portion of the chain corresponds to 1 to 15; sequence MESNNGEAKIQKVKN. A helical transmembrane segment spans residues 16-36; the sequence is WSPVWIFPIVTALIGAWVLFY. Residues 37–546 are Periplasmic-facing; it reads HYSHQGPEVT…KDPEPKRAKQ (510 aa). MCE/MlaD stretches follow at residues 42–133, 158–217, and 285–389; these read GPEV…LQPG, IRVI…NNVR, and HIDY…LDFY. Residues 437–464 are a coiled coil; the sequence is IEQATSTLSESQRTMKNLQTTLDSMNKI.

The protein belongs to the PqiB family. Homohexamer. May form a complex composed of PqiA, PqiB and PqiC. Interacts with PqiC.

It is found in the cell inner membrane. Its function is as follows. Forms a tunnel that spans the entire periplasmic space. Could be implicated in lipid transport between the inner membrane and the outer membrane. Binds phospholipids. Required for outer membrane homeostasis. Contributes to membrane integrity. The polypeptide is Intermembrane transport protein PqiB (Escherichia coli (strain K12)).